A 1865-amino-acid polypeptide reads, in one-letter code: MTRWVPTKREEKYGVAFYNYDARGADELSLQIGDTVHILETYEGWYRGYTLRKKSKKGIFPASYIHLKEAIVEGKGQHETVIPGDLPLIQEVTTTLREWSTIWRQLYVQDNREMFRSVRHMIYDLIEWRSQILSGTLPQDELKELKKKVTAKIDYGNRILDLDLVVRDEDGNILDPELTSTISLFRAHEVASKQVEERLQEEKSQKQNMDINRQAKFAATPSLALFVNLKNVVCKIGEDAEVLMSLYDPMESKFISENYLVRWSSSGLPKDIDRLHNLRAVFTDLGSKDLKREKISFVCQIVRVGRMELRDSNTRKLTSGLRRPFGVAVMDVTDIINGKVDDEDKQHFIPFQAVAGENDFLQTVINKVIAAKEVNHKGQGLWVTLKLLPGDIHQIRKEFPHLVDRTTAVARKTGFPEIIMPGDVRNDIYVTLVQGDFDKGSKTTAKNVEVTVSVYDEDGKRLEHVIFPGAGDEAISEYKSVIYYQVKQPRWFETLKVAIPIEDVNRSHLRFTFRHRSSQDSKDKSEKIFALAFVKLMRYDGTTLRDGEHDLIVYKAEAKKLEDAATYLSLPSTKGELEEKGHSATGKGMQSLGSCTISKDSFQISTLVCSTKLTQNVDLLGLLKWRSNTNLLQQNLRQLMKVDGGEVVKFLQDTLDALFNIMMENSESETFDTLVFDALVFIIGLIADRKFQHFNPVLETYIKKHFSATLAYTKLTKVLRTYVASAEKPGVNEQLYKAIKALEYIFKFIVRSRVLFNQLYENKGEADFVESLLQLFRSINDMMSSLSELTVRVKGAALKYLPTIVNDVKLVFDPKELSKMFTEFILNVPAGLLTVQKLSCLIEIVHSDLFTQHDCREILLPMMTDQLKYHLERQEELEACCQLLSNILEVLYRKDVGPTQRHVQIIMETLLRTVNRTVISMGRDSELIGNFVACMTAILRQMEDYHYAHLIKTFGKMRTDVVDFLMETFIMFKNLIGKNVYPFDWVIMNTMQNKVFLRAINQYADMLNKRFLDQANFELQLWNNYFHLAVAFLTQESLQLENFSSAKRAKILNKYGDMRRQIGFEIRDMWYNLGQHKIKFIPEMVGPILEMTLIPETELRKATLPIFFDMMQCEFHSTRSFQMFENEIITKLDHEVEGGRGDEQYKVLFDKILLEHCRKHKYLAKTGETFVKLVVRLMERLLDYRTIMHDENKDNRMSCTVNVLNFYKEIEREEMYIRYLYKLCDLHKECDNYTEAAYTLLLHAKLLKWSEDVCAAHLTQRDGFQATTQGQLKEQLYQEIIHYFDKGKMWEEAIALGKELAEQYETEMFDYEQLSELLKKQAQFYENIVKVIRPKPDYFAVGYYGQGFPSFLRGKVFIYRGKEYERREDFEARLLTQFPNAEKMKTTSPPGDDIKTSPGQYIQCFTVKPKLDLPPRFHRPVSEQIVSFYRVNEVQRFEYSRPIRKGEKNPDNEFANMWIERTIYTTAYKLPGILRWFEVKSVFMVEISPLENAIETMQLTNDKISSMVQQHLDDPGLPINPLSMLLNGIVDPAVMGGFANYEKAFFTDRYLQEHPEAHGQIEKLKDLIAWQIPFLAEGIRIHGDKVTEALRPFHERMEACFKQLKEKVEKQYGVRTMPSGLDDRRGSRPRSMVRSFTMPSSSRPLSVASVSSFSSDSTPSRPGSDGFALEPLLPKKMHSRSQDKLDKDDPDKEKKDKKKEKRNSKHQEIFDKEFKPADSSLQQSEAVILSETISPLRPQRPKSQVINVIGNERRFSVSPASPSSQQTPPPVTPRAKLSFSIQPSLELNGMMGMDVADVPPPLPLKGNMADYGNLMENQDMMVSPTSPPPPPPQRQQPPPLPSKTPPPPPPKTTRKQTSVDSGIVQ.

The SH3 domain occupies 9–70 (REEKYGVAFY…PASYIHLKEA (62 aa)). Residues 425-609 (RNDIYVTLVQ…DSFQISTLVC (185 aa)) enclose the C2 DOCK-type domain. In terms of domain architecture, DOCKER spans 1207 to 1617 (YKEIEREEMY…VEKQYGVRTM (411 aa)). The disordered stretch occupies residues 1613 to 1723 (GVRTMPSGLD…FKPADSSLQQ (111 aa)). Residues 1639 to 1664 (PSSSRPLSVASVSSFSSDSTPSRPGS) are compositionally biased toward low complexity. Basic and acidic residues predominate over residues 1680–1694 (RSQDKLDKDDPDKEK). Phosphoserine is present on serine 1681. The interval 1687–1695 (KDDPDKEKK) is phosphoinositide-binding. Positions 1695–1704 (KDKKKEKRNS) are enriched in basic residues. Positions 1705–1716 (KHQEIFDKEFKP) are enriched in basic and acidic residues. Serine 1743, serine 1756, serine 1761, and serine 1764 each carry phosphoserine. Disordered regions lie at residues 1753–1778 (RRFS…AKLS) and 1801–1865 (PLPL…GIVQ). Over residues 1756-1766 (SVSPASPSSQQ) the composition is skewed to low complexity. Phosphothreonine occurs at positions 1767 and 1772. The segment at 1793–1819 (MDVADVPPPLPLKGNMADYGNLMENQD) is interaction with NCK2 second and third SH3 domain (minor). An SH3-binding; interaction with CRK motif is present at residues 1799–1805 (PPPLPLK). The tract at residues 1820–1836 (MMVSPTSPPPPPPQRQQ) is interaction with NCK2 third SH3 domain (major). Pro residues predominate over residues 1825–1851 (TSPPPPPPQRQQPPPLPSKTPPPPPPK). The segment at 1837-1852 (PPPLPSKTPPPPPPKT) is interaction with NCK2 (minor). The SH3-binding; interaction with CRK signature appears at 1838 to 1843 (PPLPSK). The residue at position 1858 (serine 1858) is a Phosphoserine.

It belongs to the DOCK family. As to quaternary structure, interacts with the SH3 domains of CRK and NCK2 via multiple sites. Interacts with nucleotide-free RAC1 via its DOCKER domain. Interacts with ELMO1, ELMO2 and probably ELMO3 via its SH3 domain. Interacts with RAC1. Interacts with ELMO1 and ADGRB1. Identified in a complex with AUTS2 and ELMO2.

The protein localises to the cytoplasm. The protein resides in the membrane. Its function is as follows. Involved in cytoskeletal rearrangements required for phagocytosis of apoptotic cells and cell motility. Along with DOCK1, mediates CRK/CRKL regulation of epithelial and endothelial cell spreading and migration on type IV collagen. Functions as a guanine nucleotide exchange factor (GEF), which activates Rac Rho small GTPases by exchanging bound GDP for free GTP. Its GEF activity may be enhanced by ELMO1. This Mus musculus (Mouse) protein is Dedicator of cytokinesis protein 1 (Dock1).